The following is a 279-amino-acid chain: Dihydropteroate synthase type-1 (279 aa).

The Pterin-binding domain occupies 1–258; sequence MVTVFGILNL…APGDLRSAIT (258 aa). Mg(2+) is bound at residue asparagine 9. (7,8-dihydropterin-6-yl)methyl diphosphate-binding positions include aspartate 82, asparagine 101, aspartate 173, lysine 212, and 246–248; that span reads RTH.

It belongs to the DHPS family. As to quaternary structure, homodimer or homotrimer. Mg(2+) is required as a cofactor.

The enzyme catalyses (7,8-dihydropterin-6-yl)methyl diphosphate + 4-aminobenzoate = 7,8-dihydropteroate + diphosphate. Its pathway is cofactor biosynthesis; tetrahydrofolate biosynthesis; 7,8-dihydrofolate from 2-amino-4-hydroxy-6-hydroxymethyl-7,8-dihydropteridine diphosphate and 4-aminobenzoate: step 1/2. Functionally, catalyzes the condensation of para-aminobenzoate (pABA) with 6-hydroxymethyl-7,8-dihydropterin diphosphate (DHPt-PP) to form 7,8-dihydropteroate (H2Pte), the immediate precursor of folate derivatives. The polypeptide is Dihydropteroate synthase type-1 (sulI) (Corynebacterium glutamicum (Brevibacterium saccharolyticum)).